We begin with the raw amino-acid sequence, 209 residues long: Claudin-4 (209 aa).

Over 1–9 (MASMGLQVT) the chain is Cytoplasmic. The segment at 1-103 (MASMGLQVTG…GVLLSVVGGK (103 aa)) is interaction with EPHA2. The helical transmembrane segment at 10–30 (GIALAVLGWLAVMLCCALPMW) threads the bilayer. Over 31–81 (RVTAFIGSNIVTSQTIWEGLWMNCVVQSTGQMQCKVYDSLLALPQDLQAAR) the chain is Extracellular. A disulfide bridge links C54 with C64. A helical transmembrane segment spans residues 82 to 102 (ALVIISIIVAALGVLLSVVGG). Residues 103–117 (KCTNCLEDESAKAKT) are Cytoplasmic-facing. The helical transmembrane segment at 118–138 (MIVAGVVFLLAGLLVIVPVSW) threads the bilayer. The Extracellular portion of the chain corresponds to 139 to 160 (TAHNIIQDFYNPLVASGQKREM). Residues 161–181 (GASLYVGWAASGLLLLGGGLL) traverse the membrane as a helical segment. The Cytoplasmic portion of the chain corresponds to 182-209 (CCNCPPRTDKPYSAKYSAARSAAASNYV). Y208 is subject to Phosphotyrosine; by EPHA2. The interactions with TJP1, TJP2 and TJP3 stretch occupies residues 208–209 (YV).

It belongs to the claudin family. Interacts with EPHA2; phosphorylates CLDN4 and may regulate tight junctions. Directly interacts with TJP1/ZO-1, TJP2/ZO-2 and TJP3/ZO-3. Interacts with CLDN1. Interacts with CLDN8. Post-translationally, phosphorylated. Phosphorylation by EPHA2 is stimulated by EFNA1 and alters interaction with TJP1.

Its subcellular location is the cell junction. The protein localises to the tight junction. It localises to the cell membrane. Channel-forming tight junction protein that mediates paracellular chloride transport in the kidney. Plays a critical role in the paracellular reabsorption of filtered chloride in the kidney collecting ducts. Claudins play a major role in tight junction-specific obliteration of the intercellular space, through calcium-independent cell-adhesion activity. The protein is Claudin-4 (CLDN4) of Chlorocebus aethiops (Green monkey).